A 261-amino-acid chain; its full sequence is Small ribosomal subunit protein uS2 (261 aa).

S2 is modified (N-acetylserine). Residues 214 to 261 (ATEDIKTDDVEEAPAADAETEWTGETEEVDWAESGATPAAEEAAASNW) are disordered. A compositionally biased stretch (acidic residues) spans 222–244 (DVEEAPAADAETEWTGETEEVDW). A compositionally biased stretch (low complexity) spans 245–261 (AESGATPAAEEAAASNW).

It belongs to the universal ribosomal protein uS2 family. As to quaternary structure, component of the small ribosomal subunit. Mature ribosomes consist of a small (40S) and a large (60S) subunit. The 40S subunit contains about 33 different proteins and 1 molecule of RNA (18S). The 60S subunit contains about 49 different proteins and 3 molecules of RNA (25S, 5.8S and 5S). Interacts with RPS21.

Its subcellular location is the cytoplasm. Its function is as follows. Required for the assembly and/or stability of the 40S ribosomal subunit. Required for the processing of the 20S rRNA-precursor to mature 18S rRNA in a late step of the maturation of 40S ribosomal subunits. The polypeptide is Small ribosomal subunit protein uS2 (Debaryomyces hansenii (strain ATCC 36239 / CBS 767 / BCRC 21394 / JCM 1990 / NBRC 0083 / IGC 2968) (Yeast)).